The following is a 111-amino-acid chain: MSYPVSAQPQGVQGYMSSNSSQWNSDVFDCCEDMGTCLCGTFVPCILACKVSKDYGECCCLPCLFGSVLAVRTGIRERYHIEGSICNDWVCLSFCAPCTLCQMARELKARN.

Belongs to the cornifelin family.

The sequence is that of Cornifelin homolog B (cnfn-b) from Xenopus laevis (African clawed frog).